A 500-amino-acid chain; its full sequence is Lysine--tRNA ligase (500 aa).

The Mg(2+) site is built by E410 and E417.

Belongs to the class-II aminoacyl-tRNA synthetase family. In terms of assembly, homodimer. Mg(2+) is required as a cofactor.

It is found in the cytoplasm. The catalysed reaction is tRNA(Lys) + L-lysine + ATP = L-lysyl-tRNA(Lys) + AMP + diphosphate. The polypeptide is Lysine--tRNA ligase (Shewanella amazonensis (strain ATCC BAA-1098 / SB2B)).